A 407-amino-acid polypeptide reads, in one-letter code: Probable beta-1,3-galactosyltransferase 4 (407 aa).

Residues 23-39 (WTLFLCIGFFCAGILFS) traverse the membrane as a helical; Signal-anchor for type II membrane protein segment.

This sequence belongs to the glycosyltransferase 31 family. Requires Mn(2+) as cofactor.

The protein resides in the golgi apparatus membrane. It participates in protein modification; protein glycosylation. In terms of biological role, beta-1,3-galactosyltransferase that transfers galactose from UDP-galactose to substrates with a terminal glycosyl residue. The chain is Probable beta-1,3-galactosyltransferase 4 (B3GALT4) from Arabidopsis thaliana (Mouse-ear cress).